We begin with the raw amino-acid sequence, 54 residues long: Small ribosomal subunit protein uS14 (54 aa).

4 residues coordinate Zn(2+): C19, C22, C37, and C40.

This sequence belongs to the universal ribosomal protein uS14 family. Zinc-binding uS14 subfamily. Part of the 30S ribosomal subunit. It depends on Zn(2+) as a cofactor.

Its function is as follows. Binds 16S rRNA, required for the assembly of 30S particles. The chain is Small ribosomal subunit protein uS14 from Saccharolobus solfataricus (strain ATCC 35092 / DSM 1617 / JCM 11322 / P2) (Sulfolobus solfataricus).